A 491-amino-acid chain; its full sequence is Nickel-binding protein NikA (491 aa).

Positions 1-18 (MKFKRLATIFSAVLVLSG) are cleaved as a signal peptide. C19 carries N-palmitoyl cysteine lipidation. Residue C19 is the site of S-diacylglycerol cysteine attachment.

It belongs to the bacterial solute-binding protein 5 family. In terms of assembly, the complex is composed of two ATP-binding proteins (NikD and NikE), two transmembrane proteins (NikB and NikC) and a solute-binding protein (NikA).

The protein resides in the cell membrane. Functionally, part of the ABC transporter complex NikABCDE (Opp2) involved in nickel import. Binds nickel and transfers it to the membrane-bound permease. Required for full urease activity and plays a significant role in the virulence of S.aureus during urinary tract infection (UTI). May bind nickel via a nickel-chelator. This chain is Nickel-binding protein NikA, found in Staphylococcus aureus (strain NCTC 8325 / PS 47).